Reading from the N-terminus, the 238-residue chain is Xyloglucan-specific endo-beta-1,4-glucanase A (238 aa).

The first 14 residues, 1 to 14 (MKLSLLSLATLASA), serve as a signal peptide directing secretion.

It belongs to the glycosyl hydrolase 12 (cellulase H) family.

The protein localises to the secreted. It carries out the reaction xyloglucan + H2O = xyloglucan oligosaccharides.. In terms of biological role, catalyzes endohydrolysis of 1,4-beta-D-glucosidic linkages in xyloglucan with retention of the beta-configuration of the glycosyl residues. Specific for xyloglucan and does not hydrolyze other cell wall components. The chain is Xyloglucan-specific endo-beta-1,4-glucanase A (xgeA) from Aspergillus aculeatus.